A 324-amino-acid polypeptide reads, in one-letter code: Probable non-intrinsic ABC protein 5 (324 aa).

One can recognise an ABC transporter domain in the interval D2–G111. The next 2 helical transmembrane spans lie at Y212–F232 and L259–V279. Positions V222–S324 constitute an ABC transmembrane type-1 domain.

The protein belongs to the ABC transporter superfamily.

Its subcellular location is the membrane. This Arabidopsis thaliana (Mouse-ear cress) protein is Probable non-intrinsic ABC protein 5 (NAP5).